A 64-amino-acid chain; its full sequence is Large ribosomal subunit protein uL29 (64 aa).

Belongs to the universal ribosomal protein uL29 family.

In Levilactobacillus brevis (strain ATCC 367 / BCRC 12310 / CIP 105137 / JCM 1170 / LMG 11437 / NCIMB 947 / NCTC 947) (Lactobacillus brevis), this protein is Large ribosomal subunit protein uL29.